Consider the following 331-residue polypeptide: Tetraacyldisaccharide 4'-kinase (331 aa).

Position 51–58 (51–58) interacts with ATP; sequence TAGGAGKT.

The protein belongs to the LpxK family.

The enzyme catalyses a lipid A disaccharide + ATP = a lipid IVA + ADP + H(+). It functions in the pathway glycolipid biosynthesis; lipid IV(A) biosynthesis; lipid IV(A) from (3R)-3-hydroxytetradecanoyl-[acyl-carrier-protein] and UDP-N-acetyl-alpha-D-glucosamine: step 6/6. In terms of biological role, transfers the gamma-phosphate of ATP to the 4'-position of a tetraacyldisaccharide 1-phosphate intermediate (termed DS-1-P) to form tetraacyldisaccharide 1,4'-bis-phosphate (lipid IVA). The polypeptide is Tetraacyldisaccharide 4'-kinase (Rhodospirillum rubrum (strain ATCC 11170 / ATH 1.1.1 / DSM 467 / LMG 4362 / NCIMB 8255 / S1)).